The sequence spans 335 residues: UDP-N-acetylglucosamine--N-acetylmuramyl-(pentapeptide) pyrophosphoryl-undecaprenol N-acetylglucosamine transferase (335 aa).

UDP-N-acetyl-alpha-D-glucosamine-binding positions include 9–11 (TGG), Asn-123, Ser-176, and Gln-274.

It belongs to the glycosyltransferase 28 family. MurG subfamily.

It localises to the cell inner membrane. The enzyme catalyses di-trans,octa-cis-undecaprenyl diphospho-N-acetyl-alpha-D-muramoyl-L-alanyl-D-glutamyl-meso-2,6-diaminopimeloyl-D-alanyl-D-alanine + UDP-N-acetyl-alpha-D-glucosamine = di-trans,octa-cis-undecaprenyl diphospho-[N-acetyl-alpha-D-glucosaminyl-(1-&gt;4)]-N-acetyl-alpha-D-muramoyl-L-alanyl-D-glutamyl-meso-2,6-diaminopimeloyl-D-alanyl-D-alanine + UDP + H(+). Its pathway is cell wall biogenesis; peptidoglycan biosynthesis. Functionally, cell wall formation. Catalyzes the transfer of a GlcNAc subunit on undecaprenyl-pyrophosphoryl-MurNAc-pentapeptide (lipid intermediate I) to form undecaprenyl-pyrophosphoryl-MurNAc-(pentapeptide)GlcNAc (lipid intermediate II). This chain is UDP-N-acetylglucosamine--N-acetylmuramyl-(pentapeptide) pyrophosphoryl-undecaprenol N-acetylglucosamine transferase, found in Campylobacter fetus subsp. fetus (strain 82-40).